Reading from the N-terminus, the 639-residue chain is 3D-(3,5/4)-trihydroxycyclohexane-1,2-dione hydrolase (639 aa).

Residue Glu62 participates in thiamine diphosphate binding. The thiamine pyrophosphate binding stretch occupies residues 438–518 (SLPGDLQRMW…INILLFDNCG (81 aa)). Residues Asp489 and Asn516 each contribute to the Mg(2+) site.

It belongs to the TPP enzyme family. Requires Mg(2+) as cofactor. Thiamine diphosphate serves as cofactor.

The enzyme catalyses 3D-3,5/4-trihydroxycyclohexane-1,2-dione + H2O = 5-deoxy-D-glucuronate + H(+). Its pathway is polyol metabolism; myo-inositol degradation into acetyl-CoA; acetyl-CoA from myo-inositol: step 3/7. Functionally, involved in the cleavage of the C1-C2 bond of 3D-(3,5/4)-trihydroxycyclohexane-1,2-dione (THcHDO) to yield 5-deoxy-glucuronate (5DG). The chain is 3D-(3,5/4)-trihydroxycyclohexane-1,2-dione hydrolase from Clostridium perfringens (strain 13 / Type A).